Consider the following 356-residue polypeptide: Heme A synthase (356 aa).

5 consecutive transmembrane segments (helical) span residues 23–43 (IAIWLFVCCALVFAMVVVGGV), 105–125 (FHRLLGRVIGLAFFIPFLYFL), 141–161 (IFLLGALQGGMGWYMVKSGLV), 173–193 (AHLGLAFAIYAAMFWVALDLL), and 212–232 (STMLSALVFIMVLSGGFVAGI). Position 274 (His-274) interacts with heme. 3 helical membrane passes run 276 to 296 (LIAWTLAILVPIFWLKSRAVP), 307 to 327 (LLLIMLAVQITLGISTLLLVV), and 329 to 349 (LTLAAAHQAGALLLFTAALWV). His-335 contributes to the heme binding site.

The protein belongs to the COX15/CtaA family. Type 2 subfamily. In terms of assembly, interacts with CtaB. Heme b serves as cofactor.

Its subcellular location is the cell membrane. The catalysed reaction is Fe(II)-heme o + 2 A + H2O = Fe(II)-heme a + 2 AH2. It functions in the pathway porphyrin-containing compound metabolism; heme A biosynthesis; heme A from heme O: step 1/1. Its function is as follows. Catalyzes the conversion of heme O to heme A by two successive hydroxylations of the methyl group at C8. The first hydroxylation forms heme I, the second hydroxylation results in an unstable dihydroxymethyl group, which spontaneously dehydrates, resulting in the formyl group of heme A. The chain is Heme A synthase from Nitrosospira multiformis (strain ATCC 25196 / NCIMB 11849 / C 71).